Reading from the N-terminus, the 560-residue chain is 2-succinylbenzoate--CoA ligase, chloroplastic/peroxisomal (560 aa).

A chloroplast-targeting transit peptide spans 1-15 (MANHSRPHICQCLTR). The next 3 helical transmembrane spans lie at 69-89 (LFLE…PLNY), 189-209 (GVTI…AIAG), and 225-245 (IGGL…VLLP). Residues 558–560 (SSL) carry the Microbody targeting signal motif.

It belongs to the ATP-dependent AMP-binding enzyme family. MenE subfamily. As to expression, high expression in young leaves and flowers. Not expressed in roots.

It is found in the plastid. The protein localises to the chloroplast membrane. The protein resides in the peroxisome membrane. It carries out the reaction 2-succinylbenzoate + ATP + CoA = 2-succinylbenzoyl-CoA + AMP + diphosphate. Functionally, involved in the biosynthesis of phylloquinone (vitamin K1). Converts 2-succinylbenzoate (OSB) to 2-succinylbenzoyl-CoA (OSB-CoA). This Arabidopsis thaliana (Mouse-ear cress) protein is 2-succinylbenzoate--CoA ligase, chloroplastic/peroxisomal (AAE14).